The following is a 418-amino-acid chain: Hydroxysteroid dehydrogenase-like protein 2 (418 aa).

Residues Gly17–Gly23, Lys42, and Asp74 each bind NADP(+). An N6-(2-hydroxyisobutyryl)lysine modification is found at Lys42. An N6-acetyllysine modification is found at Lys116. Tyr168 functions as the Proton acceptor in the catalytic mechanism. Lys172 is an NADP(+) binding site. The 110-residue stretch at Arg306 to Asn415 folds into the SCP2 domain. Lys318 bears the N6-succinyllysine mark.

Belongs to the short-chain dehydrogenases/reductases (SDR) family.

It is found in the peroxisome. Its subcellular location is the mitochondrion. In terms of biological role, has apparently no steroid dehydrogenase activity. Controls bile acid (BA) and lipid metabolism in response to nutritional cues. This is Hydroxysteroid dehydrogenase-like protein 2 (HSDL2) from Bos taurus (Bovine).